We begin with the raw amino-acid sequence, 98 residues long: NADH-ubiquinone oxidoreductase chain 4L (98 aa).

3 helical membrane passes run 1–21 (MTLIHMNILMAFSMSLVGLLM), 29–49 (ALLCLEGMMLSLFVLATLTIL), and 61–81 (IILLVFAACEAAIGLALLVMV).

It belongs to the complex I subunit 4L family. As to quaternary structure, core subunit of respiratory chain NADH dehydrogenase (Complex I) which is composed of 45 different subunits.

It is found in the mitochondrion inner membrane. The enzyme catalyses a ubiquinone + NADH + 5 H(+)(in) = a ubiquinol + NAD(+) + 4 H(+)(out). Its function is as follows. Core subunit of the mitochondrial membrane respiratory chain NADH dehydrogenase (Complex I) which catalyzes electron transfer from NADH through the respiratory chain, using ubiquinone as an electron acceptor. Part of the enzyme membrane arm which is embedded in the lipid bilayer and involved in proton translocation. This Megaptera novaeangliae (Humpback whale) protein is NADH-ubiquinone oxidoreductase chain 4L (MT-ND4L).